A 212-amino-acid polypeptide reads, in one-letter code: MSGLFITFEGPEGAGKTTVLQEMKEILSAEGLPVTATREPGGIDIAEQIREVILNKNNTLMDAKTEALLYAAARRQHLAEKVQPALKEGRIVLCDRFIDSSLAYQGYARGLGIDEVLSINQFAIGDTMPDVTIYFSIEPEEGLKRITSNDSREKNRLDLEALHFHTKVREGYQKVMQRFPERFHTIDASKKKELVIQDALQVINEALKKIQL.

10 to 17 (GPEGAGKT) is a binding site for ATP.

This sequence belongs to the thymidylate kinase family.

It carries out the reaction dTMP + ATP = dTDP + ADP. Functionally, phosphorylation of dTMP to form dTDP in both de novo and salvage pathways of dTTP synthesis. The protein is Thymidylate kinase of Bacillus velezensis (strain DSM 23117 / BGSC 10A6 / LMG 26770 / FZB42) (Bacillus amyloliquefaciens subsp. plantarum).